The primary structure comprises 335 residues: Glycerol-3-phosphate dehydrogenase [NAD(P)+] (335 aa).

Residues serine 15, tyrosine 16, histidine 36, and lysine 110 each contribute to the NADPH site. Sn-glycerol 3-phosphate-binding residues include lysine 110, glycine 139, and threonine 141. Alanine 143 serves as a coordination point for NADPH. The sn-glycerol 3-phosphate site is built by lysine 195, aspartate 248, serine 258, arginine 259, and asparagine 260. Residue lysine 195 is the Proton acceptor of the active site. Arginine 259 is a binding site for NADPH. The NADPH site is built by valine 283 and glutamate 285.

Belongs to the NAD-dependent glycerol-3-phosphate dehydrogenase family.

Its subcellular location is the cytoplasm. It catalyses the reaction sn-glycerol 3-phosphate + NAD(+) = dihydroxyacetone phosphate + NADH + H(+). It carries out the reaction sn-glycerol 3-phosphate + NADP(+) = dihydroxyacetone phosphate + NADPH + H(+). Its pathway is membrane lipid metabolism; glycerophospholipid metabolism. In terms of biological role, catalyzes the reduction of the glycolytic intermediate dihydroxyacetone phosphate (DHAP) to sn-glycerol 3-phosphate (G3P), the key precursor for phospholipid synthesis. The sequence is that of Glycerol-3-phosphate dehydrogenase [NAD(P)+] from Haemophilus influenzae (strain 86-028NP).